The following is a 564-amino-acid chain: Formate--tetrahydrofolate ligase (564 aa).

Residue 65-72 (TPLGEGKT) coordinates ATP.

It belongs to the formate--tetrahydrofolate ligase family.

The catalysed reaction is (6S)-5,6,7,8-tetrahydrofolate + formate + ATP = (6R)-10-formyltetrahydrofolate + ADP + phosphate. It participates in one-carbon metabolism; tetrahydrofolate interconversion. This chain is Formate--tetrahydrofolate ligase, found in Roseiflexus castenholzii (strain DSM 13941 / HLO8).